Reading from the N-terminus, the 142-residue chain is Baculoviral IAP repeat-containing protein 5 (142 aa).

Residues Arg-18–Ser-88 form a BIR repeat. Ser-20 is modified (phosphoserine; by AURKC). N6-acetyllysine is present on Lys-23. At Thr-34 the chain carries Phosphothreonine; by CDK1 and CDK15. Residue Thr-48 is modified to Phosphothreonine; by CK2; in vitro. 4 residues coordinate Zn(2+): Cys-57, Cys-60, His-77, and Cys-84. N6-acetyllysine is present on residues Lys-90, Lys-110, Lys-112, and Lys-115. Thr-117 carries the phosphothreonine; by AURKB modification.

It belongs to the IAP family. Monomer or homodimer. Exists as a homodimer in the apo state and as a monomer in the CPC-bound state. The monomer protects cells against apoptosis more efficiently than the dimer. Only the dimeric form is capable of enhancing tubulin stability in cells. When phosphorylated, interacts with LAMTOR5/HBXIP; the resulting complex binds pro-CASP9, as well as active CASP9, but much less efficiently. Component of the chromosomal passenger complex (CPC) composed of at least BIRC5/survivin, CDCA8/borealin, INCENP, AURKB or AURKC; in the complex forms a triple-helix bundle-based subcomplex with INCENP and CDCA8. Interacts with JTB. Interacts (via BIR domain) with histone H3 phosphorylated at 'Thr-3' (H3pT3). Interacts with EVI5. Interacts with GTP-bound RAN in both the S and M phases of the cell cycle. Interacts with USP9X. Interacts with tubulin. Interacts with BIRC2/c-IAP1. The monomeric form interacts with XIAP/BIRC4. Both the dimeric and monomeric form can interact with DIABLO/SMAC. Interacts with BIRC6/bruce. Interacts with FBXL7; this interaction facilitates the polyubiquitination and subsequent proteasomal degradation of BIRC5 by the SCF(FBXL7) E3 ubiquitin-protein ligase complex. Ubiquitinated by the Cul9-RING ubiquitin-protein ligase complex, leading to its degradation. Ubiquitination is required for centrosomal targeting. Deubiquitinated by USP35 or USP38; leading to stabilization. In terms of processing, in vitro phosphorylation at Thr-117 by AURKB prevents interaction with INCENP and localization to mitotic chromosomes. Phosphorylation at Thr-48 by CK2 is critical for its mitotic and anti-apoptotic activities. Phosphorylation at Thr-34 by CDK15 is critical for its anti-apoptotic activity. Phosphorylation at Ser-20 by AURKC is critical for regulation of proper chromosome alignment and segregation, and possibly cytokinesis. As to expression, expressed in spleen, lung, brain, heart, kidney and intestine (at protein level). Expressed in cochlea including the organ of Corti, the lateral wall, the interdental cells of the Limbus as well as in cells of the cochlear nerve and the spiral ganglions (at protein level). Also expressed in Schwann cells (at protein level). Not expressed in cells of the inner and outer sulcus or the Reissner's membrane (at protein level).

Its subcellular location is the cytoplasm. The protein localises to the nucleus. The protein resides in the chromosome. It localises to the centromere. It is found in the cytoskeleton. Its subcellular location is the spindle. The protein localises to the kinetochore. The protein resides in the midbody. Its function is as follows. Multitasking protein that has dual roles in promoting cell proliferation and preventing apoptosis. Component of a chromosome passage protein complex (CPC) which is essential for chromosome alignment and segregation during mitosis and cytokinesis. Acts as an important regulator of the localization of this complex; directs CPC movement to different locations from the inner centromere during prometaphase to midbody during cytokinesis and participates in the organization of the center spindle by associating with polymerized microtubules. Involved in the recruitment of CPC to centromeres during early mitosis via association with histone H3 phosphorylated at 'Thr-3' (H3pT3) during mitosis. The complex with RAN plays a role in mitotic spindle formation by serving as a physical scaffold to help deliver the RAN effector molecule TPX2 to microtubules. May counteract a default induction of apoptosis in G2/M phase. The acetylated form represses STAT3 transactivation of target gene promoters. May play a role in neoplasia. Inhibitor of CASP3 and CASP7. Essential for the maintenance of mitochondrial integrity and function. This Cavia porcellus (Guinea pig) protein is Baculoviral IAP repeat-containing protein 5.